The following is a 227-amino-acid chain: 2,3-bisphosphoglycerate-dependent phosphoglycerate mutase (227 aa).

Substrate is bound by residues 8 to 15 (RHGKSVWN), 21 to 22 (TG), R58, 110 to 113 (ERMY), K121, 137 to 138 (RR), and 181 to 182 (GN). H9 acts as the Tele-phosphohistidine intermediate in catalysis. E110 serves as the catalytic Proton donor/acceptor.

It belongs to the phosphoglycerate mutase family. BPG-dependent PGAM subfamily.

It catalyses the reaction (2R)-2-phosphoglycerate = (2R)-3-phosphoglycerate. It functions in the pathway carbohydrate degradation; glycolysis; pyruvate from D-glyceraldehyde 3-phosphate: step 3/5. Its function is as follows. Catalyzes the interconversion of 2-phosphoglycerate and 3-phosphoglycerate. The polypeptide is 2,3-bisphosphoglycerate-dependent phosphoglycerate mutase (Chlamydia caviae (strain ATCC VR-813 / DSM 19441 / 03DC25 / GPIC) (Chlamydophila caviae)).